The following is a 204-amino-acid chain: Peptide deformylase (204 aa).

C131 and H174 together coordinate Fe cation. E175 is a catalytic residue. Residue H178 coordinates Fe cation.

It belongs to the polypeptide deformylase family. Fe(2+) serves as cofactor.

The catalysed reaction is N-terminal N-formyl-L-methionyl-[peptide] + H2O = N-terminal L-methionyl-[peptide] + formate. Functionally, removes the formyl group from the N-terminal Met of newly synthesized proteins. Requires at least a dipeptide for an efficient rate of reaction. N-terminal L-methionine is a prerequisite for activity but the enzyme has broad specificity at other positions. The chain is Peptide deformylase from Streptococcus agalactiae serotype III (strain NEM316).